The sequence spans 217 residues: Ribonuclease HII 2 (217 aa).

An RNase H type-2 domain is found at 28–217; that stretch reads GLLAGVDEAG…VREVLLERRP (190 aa). Residues Asp34, Glu35, and Asp126 each coordinate a divalent metal cation.

This sequence belongs to the RNase HII family. Mn(2+) serves as cofactor. Mg(2+) is required as a cofactor.

Its subcellular location is the cytoplasm. The enzyme catalyses Endonucleolytic cleavage to 5'-phosphomonoester.. Endonuclease that specifically degrades the RNA of RNA-DNA hybrids. In Methylibium petroleiphilum (strain ATCC BAA-1232 / LMG 22953 / PM1), this protein is Ribonuclease HII 2.